Consider the following 152-residue polypeptide: Protein SprT-like (152 aa).

The SprT-like domain maps to Gln7 to Pro147. His67 lines the Zn(2+) pocket. Residue Glu68 is part of the active site. His71 provides a ligand contact to Zn(2+).

It belongs to the SprT family. Requires Zn(2+) as cofactor.

It is found in the cytoplasm. The protein is Protein SprT-like of Bacillus cereus (strain G9842).